A 193-amino-acid chain; its full sequence is Selenate reductase assembly chaperone protein (193 aa).

This sequence belongs to the type II DMSO reductase enzyme chaperone family.

Its subcellular location is the cytoplasm. In terms of biological role, may function as a system-specific chaperone protein essential for the assembly of an active selenate reductase SerABC. This is Selenate reductase assembly chaperone protein from Thauera selenatis.